We begin with the raw amino-acid sequence, 362 residues long: 3-dehydroquinate synthase (362 aa).

Residues 70–75, 104–108, 128–129, Lys141, and Lys150 each bind NAD(+); these read DGEQYK, GVIGD, and TT. Residues Glu183, His246, and His263 each contribute to the Zn(2+) site.

Belongs to the sugar phosphate cyclases superfamily. Dehydroquinate synthase family. It depends on NAD(+) as a cofactor. Co(2+) serves as cofactor. Zn(2+) is required as a cofactor.

The protein localises to the cytoplasm. The enzyme catalyses 7-phospho-2-dehydro-3-deoxy-D-arabino-heptonate = 3-dehydroquinate + phosphate. Its pathway is metabolic intermediate biosynthesis; chorismate biosynthesis; chorismate from D-erythrose 4-phosphate and phosphoenolpyruvate: step 2/7. Its function is as follows. Catalyzes the conversion of 3-deoxy-D-arabino-heptulosonate 7-phosphate (DAHP) to dehydroquinate (DHQ). This Pasteurella multocida (strain Pm70) protein is 3-dehydroquinate synthase.